Here is a 620-residue protein sequence, read N- to C-terminus: Chaperone protein HscA homolog (620 aa).

It belongs to the heat shock protein 70 family.

Its function is as follows. Chaperone involved in the maturation of iron-sulfur cluster-containing proteins. Has a low intrinsic ATPase activity which is markedly stimulated by HscB. This Shewanella sp. (strain ANA-3) protein is Chaperone protein HscA homolog.